Here is a 352-residue protein sequence, read N- to C-terminus: MDPFTLEPIGALSGHDDRVWNVAWSPQGDMLASCSGDKTVRIWSRRQPRPSEQWYCSAILDQCHTRTIRSVAWSPTGRALATASFDATVAVWELSSGVWEQVAELEGHENEVKCVAWNPDGRLIATCGRDRSVWIWESMPGREFECVDVKQGHSQDVKAVTWHPSGELLVSAGYDDTIKLWTYDGDEWGCAQTLGGTGTGHESTVWDVCWDPVSRARLASCSDDLTLRLWESRAAPTSTPASAPAGAAAAGFVPSRPDLRCAVTLSGHHRRTVFSLDWAPTGLIATGDGDDSILAEEEASGLLTQPGGQWGCWARVAKAHGADVNCVRWNPAEPRLLASCSDDGLIRLWWLR.

WD repeat units follow at residues 14–53, 63–102, 107–146, 152–191, 200–240, 268–306, and 319–352; these read GHDDRVWNVAWSPQGDMLASCSGDKTVRIWSRRQPRPSEQ, CHTRTIRSVAWSPTGRALATASFDATVAVWELSSGVWEQV, GHENEVKCVAWNPDGRLIATCGRDRSVWIWESMPGREFEC, GHSQDVKAVTWHPSGELLVSAGYDDTIKLWTYDGDEWGCA, GHES…TSTP, HHRRTVFSLDWAPTGLIATGDGDDSILAEEEASGLLTQP, and AHGADVNCVRWNPAEPRLLASCSDDGLIRLWWLR.

It belongs to the WD repeat CIA1 family.

Essential component of the cytosolic iron-sulfur (Fe/S) protein assembly machinery. Required for the maturation of extramitochondrial Fe/S proteins. This Chlamydomonas reinhardtii (Chlamydomonas smithii) protein is Probable cytosolic iron-sulfur protein assembly protein CIAO1 homolog.